We begin with the raw amino-acid sequence, 707 residues long: Elongation factor G 2 (707 aa).

Residues 8-290 form the tr-type G domain; the sequence is ERYRNIGISA…AVIDYLPSPA (283 aa). Residues 17-24, 88-92, and 142-145 each bind GTP; these read AHIDAGKT, DTPGH, and NKMD.

Belongs to the TRAFAC class translation factor GTPase superfamily. Classic translation factor GTPase family. EF-G/EF-2 subfamily.

The protein resides in the cytoplasm. Functionally, catalyzes the GTP-dependent ribosomal translocation step during translation elongation. During this step, the ribosome changes from the pre-translocational (PRE) to the post-translocational (POST) state as the newly formed A-site-bound peptidyl-tRNA and P-site-bound deacylated tRNA move to the P and E sites, respectively. Catalyzes the coordinated movement of the two tRNA molecules, the mRNA and conformational changes in the ribosome. The chain is Elongation factor G 2 from Bordetella bronchiseptica (strain ATCC BAA-588 / NCTC 13252 / RB50) (Alcaligenes bronchisepticus).